Here is a 299-residue protein sequence, read N- to C-terminus: MSRSAGSFLILNGKSADNEILRGSVKLLRDQGHPIEVRVTWEKGDAARYVSEAADQGAQTVIAAGGDGTINEVAAALAGVTQEKRPALGLLPLGTANDFATSAAVPDDIELALKLAIEGRAVPIDIAHVNDKTWFINMATGGFGTRITTETPERLKAALGGVSYLIHGLMRMDALKADRCEIRGENFHWQGDALVIGIGNGRQAGGGQELCPEALINDGLLHLRIFTGEELLPALFTTLTQPEESPNIIDGASPWFEITAPHEITFNLDGEPLSGQHFRIVVEPGALQCRLPPDCPLLK.

In terms of domain architecture, DAGKc spans 2–133; sequence SRSAGSFLIL…IDIAHVNDKT (132 aa). ATP contacts are provided by residues threonine 40, 66–72, and threonine 95; that span reads GDGTINE. The Mg(2+) site is built by leucine 215, aspartate 218, and leucine 220. The Proton acceptor role is filled by glutamate 271.

Belongs to the diacylglycerol/lipid kinase family. YegS lipid kinase subfamily. Mg(2+) is required as a cofactor. Ca(2+) serves as cofactor.

The protein localises to the cytoplasm. Its function is as follows. Probably phosphorylates lipids; the in vivo substrate is unknown. In Cronobacter sakazakii (strain ATCC BAA-894) (Enterobacter sakazakii), this protein is Probable lipid kinase YegS-like.